The primary structure comprises 492 residues: 3-octaprenyl-4-hydroxybenzoate carboxy-lyase (492 aa).

Asparagine 177 contributes to the Mn(2+) binding site. Prenylated FMN-binding positions include 180 to 182, 194 to 196, and 199 to 200; these read IYR, RWL, and RG. Glutamate 243 is a Mn(2+) binding site. Aspartate 292 functions as the Proton donor in the catalytic mechanism.

It belongs to the UbiD family. As to quaternary structure, homohexamer. It depends on prenylated FMN as a cofactor. The cofactor is Mn(2+).

The protein resides in the cell membrane. The enzyme catalyses a 4-hydroxy-3-(all-trans-polyprenyl)benzoate + H(+) = a 2-(all-trans-polyprenyl)phenol + CO2. It functions in the pathway cofactor biosynthesis; ubiquinone biosynthesis. Catalyzes the decarboxylation of 3-octaprenyl-4-hydroxy benzoate to 2-octaprenylphenol, an intermediate step in ubiquinone biosynthesis. In Neisseria meningitidis serogroup A / serotype 4A (strain DSM 15465 / Z2491), this protein is 3-octaprenyl-4-hydroxybenzoate carboxy-lyase.